We begin with the raw amino-acid sequence, 99 residues long: Aspartyl/glutamyl-tRNA(Asn/Gln) amidotransferase subunit C (99 aa).

Belongs to the GatC family. In terms of assembly, heterotrimer of A, B and C subunits.

It carries out the reaction L-glutamyl-tRNA(Gln) + L-glutamine + ATP + H2O = L-glutaminyl-tRNA(Gln) + L-glutamate + ADP + phosphate + H(+). The enzyme catalyses L-aspartyl-tRNA(Asn) + L-glutamine + ATP + H2O = L-asparaginyl-tRNA(Asn) + L-glutamate + ADP + phosphate + 2 H(+). In terms of biological role, allows the formation of correctly charged Asn-tRNA(Asn) or Gln-tRNA(Gln) through the transamidation of misacylated Asp-tRNA(Asn) or Glu-tRNA(Gln) in organisms which lack either or both of asparaginyl-tRNA or glutaminyl-tRNA synthetases. The reaction takes place in the presence of glutamine and ATP through an activated phospho-Asp-tRNA(Asn) or phospho-Glu-tRNA(Gln). The polypeptide is Aspartyl/glutamyl-tRNA(Asn/Gln) amidotransferase subunit C (Variovorax paradoxus (strain S110)).